Reading from the N-terminus, the 183-residue chain is Peptide deformylase (183 aa).

Residues C110 and H153 each coordinate Fe cation. Residue E154 is part of the active site. H157 serves as a coordination point for Fe cation.

It belongs to the polypeptide deformylase family. Fe(2+) is required as a cofactor.

It catalyses the reaction N-terminal N-formyl-L-methionyl-[peptide] + H2O = N-terminal L-methionyl-[peptide] + formate. In terms of biological role, removes the formyl group from the N-terminal Met of newly synthesized proteins. Requires at least a dipeptide for an efficient rate of reaction. N-terminal L-methionine is a prerequisite for activity but the enzyme has broad specificity at other positions. The sequence is that of Peptide deformylase from Oceanobacillus iheyensis (strain DSM 14371 / CIP 107618 / JCM 11309 / KCTC 3954 / HTE831).